We begin with the raw amino-acid sequence, 386 residues long: MATKKTTKAAPKGDDRQKALDAALALIEKDFGKGAVMRLGDENRPPIQVISSGNTALDIALGIGGFPRGRIVEVYGPESSGKTTVALHAIAQAQKAGGIAAFIDAEHALDPDYARKLGVDTDALLVSQPDTGEQALEIADMLVRSGAIDILVIDSVAALTPKAEIEGEMGDSHVGLQARLMSQALRKMTGALYNSGTTAIFINQLREKIGVMFGSPETTTGGKALKFYASVRIDVRRIQTLKDGQDAIGNRTRAKIVKNKVSPPFKIAEFDIIYGEGISRESSIIDLAVDNGIVKKSGSWFTYEGDQLGQGKEKARLFLKETPELADEIEEKIFRKLGVGKFAQTADELTDDPVELIPNVDFDDEDDDFDASTAPAGTFTEVTTEN.

Glycine 76–threonine 83 provides a ligand contact to ATP. The segment at phenylalanine 362–asparagine 386 is disordered.

The protein belongs to the RecA family.

It localises to the cytoplasm. Can catalyze the hydrolysis of ATP in the presence of single-stranded DNA, the ATP-dependent uptake of single-stranded DNA by duplex DNA, and the ATP-dependent hybridization of homologous single-stranded DNAs. It interacts with LexA causing its activation and leading to its autocatalytic cleavage. The sequence is that of Protein RecA from Corynebacterium efficiens (strain DSM 44549 / YS-314 / AJ 12310 / JCM 11189 / NBRC 100395).